The chain runs to 947 residues: Protocadherin alpha-4 (947 aa).

Positions 1–29 (MEFSWGSGQESRRLLLLLLLLSAWEAGNG) are cleaved as a signal peptide. 6 Cadherin domains span residues 30 to 133 (QLHY…PPVF), 134 to 242 (PATQ…APAF), 243 to 350 (DRTI…VPDL), 351 to 455 (EFKS…APAF), 456 to 565 (AQPE…APAL), and 588 to 678 (DHVV…APKA). Residues 30–697 (QLHYSVSEEA…GPDAALVDVN (668 aa)) are Extracellular-facing. Cys96 and Cys102 form a disulfide bridge. N-linked (GlcNAc...) asparagine glycosylation is found at Asn139, Asn257, and Asn265. Asn548 carries an N-linked (GlcNAc...) asparagine glycan. The helical transmembrane segment at 698–718 (VYLIIAICAVSSLLVLTLLLY) threads the bilayer. Over 719–947 (TALRCSAPPT…GNSTTDNSDQ (229 aa)) the chain is Cytoplasmic. PXXP repeat units lie at residues 734–737 (PGKP), 774–777 (PSLP), 796–799 (PRQP), 829–832 (PGGP), 870–873 (PGNP), and 888–891 (PGSP). A 6 X 4 AA repeats of P-X-X-P region spans residues 734 to 891 (PGKPTLVCSS…PDKFIIPGSP (158 aa)). A required for interaction with FYN region spans residues 738–947 (TLVCSSAVGS…GNSTTDNSDQ (210 aa)). Disordered stretches follow at residues 754–805 (RRPR…DWRY) and 828–853 (GPGG…EVSP). Residues 892–947 (AIISIRQEPANSQIDKSDFITFGKKEETKKKKKKKKGNKTQEKKEKGNSTTDNSDQ) form a disordered region. The segment covering 906–920 (DKSDFITFGKKEETK) has biased composition (basic and acidic residues).

Forms homodimers in trans (molecules expressed by two different cells). Forms promiscuous heterodimers in cis (at the plasma membrane of the same cell) with other protocadherins. Interacts with FYN.

Its subcellular location is the cell membrane. Functionally, calcium-dependent cell-adhesion protein involved in cells self-recognition and non-self discrimination. Thereby, it is involved in the establishment and maintenance of specific neuronal connections in the brain. This chain is Protocadherin alpha-4, found in Pan troglodytes (Chimpanzee).